Here is a 193-residue protein sequence, read N- to C-terminus: Ion-translocating oxidoreductase complex subunit A (193 aa).

The next 6 helical transmembrane spans lie at 5–25, 39–59, 63–83, 102–122, 134–154, and 171–191; these read LLLL…FLGL, IGMG…SYLI, ILAP…VIAV, VLGI…VALL, IIYG…FSAM, and SIAM…TGLV.

The protein belongs to the NqrDE/RnfAE family. As to quaternary structure, the complex is composed of six subunits: RnfA, RnfB, RnfC, RnfD, RnfE and RnfG.

Its subcellular location is the cell inner membrane. Functionally, part of a membrane-bound complex that couples electron transfer with translocation of ions across the membrane. This chain is Ion-translocating oxidoreductase complex subunit A, found in Aliivibrio salmonicida (strain LFI1238) (Vibrio salmonicida (strain LFI1238)).